A 261-amino-acid polypeptide reads, in one-letter code: Putative ketoacyl reductase (261 aa).

NADP(+)-binding residues include T15, S16, I18, R38, G39, D63, V64, N90, Y157, K161, V190, and T192. The active-site Proton acceptor is Y157.

It belongs to the short-chain dehydrogenases/reductases (SDR) family. As to quaternary structure, homotetramer.

It participates in antibiotic biosynthesis; actinorhodin biosynthesis. This Streptomyces coelicolor (strain ATCC BAA-471 / A3(2) / M145) protein is Putative ketoacyl reductase (actIII).